The primary structure comprises 403 residues: Aspartate aminotransferase, cytoplasmic isozyme 2 (403 aa).

Methionine 1 bears the N-acetylmethionine mark. Residues glycine 37, tryptophan 132, and asparagine 185 each contribute to the L-aspartate site. Position 249 is an N6-(pyridoxal phosphate)lysine (lysine 249). Position 377 (arginine 377) interacts with L-aspartate.

It belongs to the class-I pyridoxal-phosphate-dependent aminotransferase family. As to quaternary structure, homodimer. Pyridoxal 5'-phosphate is required as a cofactor.

It is found in the cytoplasm. It catalyses the reaction L-aspartate + 2-oxoglutarate = oxaloacetate + L-glutamate. Important for the metabolism of amino acids and Krebs-cycle related organic acids. In plants, it is involved in nitrogen metabolism and in aspects of carbon and energy metabolism. This Arabidopsis thaliana (Mouse-ear cress) protein is Aspartate aminotransferase, cytoplasmic isozyme 2 (ASP4).